The sequence spans 505 residues: Band 7 protein CG42540 (505 aa).

Positions 1 to 164 are disordered; sequence MPDSMMDMEH…IHRAEARRAD (164 aa). Over residues 47–60 the composition is skewed to basic and acidic residues; it reads SEERDRDRDRERDH. Composition is skewed to low complexity over residues 82 to 104 and 113 to 139; these read QLHQQQPQQQQQQQPLTQLQQPQ and QQQQQQQQMMQQPQQQQQMQQPQQQLP. The chain crosses the membrane as a helical span at residues 178–198; it reads LIFLSVALVIMTLPFSLFVCF. Positions 443–505 are disordered; sequence GNTPPPLQLA…QQGQQISSAM (63 aa). Low complexity predominate over residues 451-505; the sequence is LAPQQQMGQQQQPQYQQPQQQQQQYQPQQQQQQQQQQPQQQDQLYQQGQQISSAM.

This sequence belongs to the band 7/mec-2 family.

It localises to the membrane. The chain is Band 7 protein CG42540 from Drosophila melanogaster (Fruit fly).